Reading from the N-terminus, the 245-residue chain is Cytochrome c oxidase subunit 2 (245 aa).

Residues 1–36 lie on the Mitochondrial intermembrane side of the membrane; the sequence is MYMLNNMLNDVPTPWGMFFQDSATPNMEGMMELHNN. A helical membrane pass occupies residues 37-56; it reads VMFYLCMMLGFVSYMLYNML. Residues 57–76 lie on the Mitochondrial matrix side of the membrane; that stretch reads TTYNHSVLPYKYLYHGQFIE. Residues 77–101 form a helical membrane-spanning segment; the sequence is IVWTTFPAMILLIIAFPSFILLYIC. Residues 102 to 245 are Mitochondrial intermembrane-facing; the sequence is DEVIAPAMTI…GEFLAWIDEQ (144 aa). 6 residues coordinate Cu cation: His-180, Cys-215, Glu-217, Cys-219, His-223, and Met-226. Glu-217 contributes to the Mg(2+) binding site.

The protein belongs to the cytochrome c oxidase subunit 2 family. In terms of assembly, component of the cytochrome c oxidase (complex IV, CIV), a multisubunit enzyme composed of a catalytic core of 3 subunits and several supernumerary subunits. The complex exists as a monomer or a dimer and forms supercomplexes (SCs) in the inner mitochondrial membrane with ubiquinol-cytochrome c oxidoreductase (cytochrome b-c1 complex, complex III, CIII). It depends on Cu cation as a cofactor.

It is found in the mitochondrion inner membrane. The enzyme catalyses 4 Fe(II)-[cytochrome c] + O2 + 8 H(+)(in) = 4 Fe(III)-[cytochrome c] + 2 H2O + 4 H(+)(out). Component of the cytochrome c oxidase, the last enzyme in the mitochondrial electron transport chain which drives oxidative phosphorylation. The respiratory chain contains 3 multisubunit complexes succinate dehydrogenase (complex II, CII), ubiquinol-cytochrome c oxidoreductase (cytochrome b-c1 complex, complex III, CIII) and cytochrome c oxidase (complex IV, CIV), that cooperate to transfer electrons derived from NADH and succinate to molecular oxygen, creating an electrochemical gradient over the inner membrane that drives transmembrane transport and the ATP synthase. Cytochrome c oxidase is the component of the respiratory chain that catalyzes the reduction of oxygen to water. Electrons originating from reduced cytochrome c in the intermembrane space (IMS) are transferred via the dinuclear copper A center (CU(A)) of subunit 2 and heme A of subunit 1 to the active site in subunit 1, a binuclear center (BNC) formed by heme A3 and copper B (CU(B)). The BNC reduces molecular oxygen to 2 water molecules using 4 electrons from cytochrome c in the IMS and 4 protons from the mitochondrial matrix. The sequence is that of Cytochrome c oxidase subunit 2 (COX2) from Dekkera bruxellensis (Brettanomyces custersii).